The chain runs to 387 residues: Ferrochelatase (387 aa).

Positions 196 and 277 each coordinate Fe cation.

It belongs to the ferrochelatase family.

It localises to the cytoplasm. The enzyme catalyses heme b + 2 H(+) = protoporphyrin IX + Fe(2+). It functions in the pathway porphyrin-containing compound metabolism; protoheme biosynthesis; protoheme from protoporphyrin-IX: step 1/1. Its function is as follows. Catalyzes the ferrous insertion into protoporphyrin IX. The protein is Ferrochelatase of Gloeothece citriformis (strain PCC 7424) (Cyanothece sp. (strain PCC 7424)).